A 928-amino-acid polypeptide reads, in one-letter code: MYCBP-associated protein (928 aa).

2 disordered regions span residues 1 to 38 (MKKANDRQSPPKLLEKKRAKAPEQPTPPIQEEPEPVSN) and 164 to 183 (EEPKPKSPKEEKRPPWAPPL). Basic and acidic residues predominate over residues 164 to 177 (EEPKPKSPKEEKRP). Ser557 is modified (phosphoserine). At Thr558 the chain carries Phosphothreonine. At Ser564 the chain carries Phosphoserine. The interval 786 to 881 (IPDEGQKSPP…SSATSQEPID (96 aa)) is disordered. Residues 806 to 865 (LGKEDRRGGAQEKKQLSARDKEEKKGSKTPSKEDRLNSKKQKAKDDKKVVKSTSRDRLLS) show a composition bias toward basic and acidic residues.

As to quaternary structure, interacts with MYCBP. In terms of tissue distribution, expressed in brain, retina, testis, heart and lung. Not detected in liver, kidney or intestine. In brain, highly abundant in CNS neurons of the hippocampus and cerebellum. Strongly expressed in cochlea and vestibular sensory epithelia. In both the organ of Corti and the vestibular organ, expression is restricted to hair cells.

It is found in the cytoplasm. Its subcellular location is the membrane. In terms of biological role, may play a role in spermatogenesis. May be involved in synaptic processes. The chain is MYCBP-associated protein from Rattus norvegicus (Rat).